Here is a 98-residue protein sequence, read N- to C-terminus: DNA-binding protein HU (98 aa).

The protein belongs to the bacterial histone-like protein family. As to quaternary structure, homodimer.

In terms of biological role, histone-like DNA-binding protein which is capable of wrapping DNA to stabilize it, and thus to prevent its denaturation under extreme environmental conditions. This is DNA-binding protein HU (hup) from Campylobacter jejuni subsp. jejuni serotype O:2 (strain ATCC 700819 / NCTC 11168).